A 269-amino-acid chain; its full sequence is uncharacterized protein (269 aa).

103-110 (GIFTMGKS) contacts ATP.

This is an uncharacterized protein from Mycoplasma pneumoniae (strain ATCC 29342 / M129 / Subtype 1) (Mycoplasmoides pneumoniae).